The chain runs to 282 residues: tRNA pseudouridine synthase B (282 aa).

Asp-39 functions as the Nucleophile in the catalytic mechanism.

This sequence belongs to the pseudouridine synthase TruB family. Type 1 subfamily.

It carries out the reaction uridine(55) in tRNA = pseudouridine(55) in tRNA. Functionally, responsible for synthesis of pseudouridine from uracil-55 in the psi GC loop of transfer RNAs. The protein is tRNA pseudouridine synthase B of Borreliella afzelii (strain PKo) (Borrelia afzelii).